Consider the following 115-residue polypeptide: Large ribosomal subunit protein bL20 (115 aa).

The protein belongs to the bacterial ribosomal protein bL20 family.

In terms of biological role, binds directly to 23S ribosomal RNA and is necessary for the in vitro assembly process of the 50S ribosomal subunit. It is not involved in the protein synthesizing functions of that subunit. This chain is Large ribosomal subunit protein bL20, found in Prochlorococcus marinus (strain MIT 9215).